Consider the following 317-residue polypeptide: Metaxin-1 (317 aa).

Glycyl lysine isopeptide (Lys-Gly) (interchain with G-Cter in ubiquitin) cross-links involve residues Lys38, Lys41, and Lys78. The helical transmembrane segment at 164–184 threads the bilayer; that stretch reads EELEKELYQEAQECLTLLSQR.

It belongs to the metaxin family. In terms of assembly, interacts with MTX2/metaxin-2. Associates with the mitochondrial contact site and cristae organizing system (MICOS) complex, composed of at least MICOS10/MIC10, CHCHD3/MIC19, CHCHD6/MIC25, APOOL/MIC27, IMMT/MIC60, APOO/MIC23/MIC26 and QIL1/MIC13. This complex was also known under the names MINOS or MitOS complex. The MICOS complex associates with mitochondrial outer membrane proteins SAMM50, MTX1 and MTX2 (together described as components of the mitochondrial outer membrane sorting assembly machinery (SAM) complex) and DNAJC11, mitochondrial inner membrane protein TMEM11 and with HSPA9. The MICOS and SAM complexes together with DNAJC11 are part of a large protein complex spanning both membranes termed the mitochondrial intermembrane space bridging (MIB) complex. Interacts with ARMC1. Post-translationally, ubiquitinated by PRKN during mitophagy, leading to its degradation and enhancement of mitophagy. Deubiquitinated by USP30.

The protein resides in the mitochondrion outer membrane. Involved in transport of proteins into the mitochondrion. Essential for embryonic development. This is Metaxin-1 (MTX1) from Bos taurus (Bovine).